The chain runs to 506 residues: 2-isopropylmalate synthase (506 aa).

A Pyruvate carboxyltransferase domain is found at 4–266; it reads ILFMDTTLRD…EPSMTLKEIK (263 aa). 4 residues coordinate Mn(2+): Asp13, His201, His203, and Asn237. The segment at 390–506 is regulatory domain; it reads NITQLQVHFV…KLKSFIQLVK (117 aa).

The protein belongs to the alpha-IPM synthase/homocitrate synthase family. LeuA type 1 subfamily. As to quaternary structure, homodimer. Mn(2+) is required as a cofactor.

The protein localises to the cytoplasm. The enzyme catalyses 3-methyl-2-oxobutanoate + acetyl-CoA + H2O = (2S)-2-isopropylmalate + CoA + H(+). It participates in amino-acid biosynthesis; L-leucine biosynthesis; L-leucine from 3-methyl-2-oxobutanoate: step 1/4. Functionally, catalyzes the condensation of the acetyl group of acetyl-CoA with 3-methyl-2-oxobutanoate (2-ketoisovalerate) to form 3-carboxy-3-hydroxy-4-methylpentanoate (2-isopropylmalate). This is 2-isopropylmalate synthase from Bacillus anthracis (strain A0248).